We begin with the raw amino-acid sequence, 252 residues long: Adenosylcobinamide-GDP ribazoletransferase (252 aa).

6 helical membrane passes run 29–49 (LYWFPFVGLLLGALLAALGYV), 50–70 (GSLSGWHEFAALLVVLGGIVL), 104–124 (VGSFGALALSGVMLLKWVAVV), 129–149 (FGLFDVVMAGILLARLVQVLL), 166–186 (FVAGAGAPHAFSALLFTLALL), and 194–214 (FPTMLWLLGAALVAGSMVGMV).

Belongs to the CobS family. Requires Mg(2+) as cofactor.

Its subcellular location is the cell inner membrane. The catalysed reaction is alpha-ribazole + adenosylcob(III)inamide-GDP = adenosylcob(III)alamin + GMP + H(+). It catalyses the reaction alpha-ribazole 5'-phosphate + adenosylcob(III)inamide-GDP = adenosylcob(III)alamin 5'-phosphate + GMP + H(+). It functions in the pathway cofactor biosynthesis; adenosylcobalamin biosynthesis; adenosylcobalamin from cob(II)yrinate a,c-diamide: step 7/7. Its function is as follows. Joins adenosylcobinamide-GDP and alpha-ribazole to generate adenosylcobalamin (Ado-cobalamin). Also synthesizes adenosylcobalamin 5'-phosphate from adenosylcobinamide-GDP and alpha-ribazole 5'-phosphate. The protein is Adenosylcobinamide-GDP ribazoletransferase of Chlorobium chlorochromatii (strain CaD3).